A 163-amino-acid chain; its full sequence is SsrA-binding protein (163 aa).

This sequence belongs to the SmpB family.

The protein resides in the cytoplasm. In terms of biological role, required for rescue of stalled ribosomes mediated by trans-translation. Binds to transfer-messenger RNA (tmRNA), required for stable association of tmRNA with ribosomes. tmRNA and SmpB together mimic tRNA shape, replacing the anticodon stem-loop with SmpB. tmRNA is encoded by the ssrA gene; the 2 termini fold to resemble tRNA(Ala) and it encodes a 'tag peptide', a short internal open reading frame. During trans-translation Ala-aminoacylated tmRNA acts like a tRNA, entering the A-site of stalled ribosomes, displacing the stalled mRNA. The ribosome then switches to translate the ORF on the tmRNA; the nascent peptide is terminated with the 'tag peptide' encoded by the tmRNA and targeted for degradation. The ribosome is freed to recommence translation, which seems to be the essential function of trans-translation. This Corynebacterium diphtheriae (strain ATCC 700971 / NCTC 13129 / Biotype gravis) protein is SsrA-binding protein.